Reading from the N-terminus, the 232-residue chain is NKG2-D type II integral membrane protein (232 aa).

Residues 1 to 66 are Cytoplasmic-facing; that stretch reads MALIRDRKSH…IEKLKISPMF (66 aa). The helical; Signal-anchor for type II membrane protein transmembrane segment at 67-89 threads the bilayer; that stretch reads VVRVLAIALAIRFTLNTLMWLAI. The Extracellular portion of the chain corresponds to 90-232; the sequence is FKETFQPVLC…NTYICMKRAV (143 aa). 2 disulfides stabilise this stretch: C112/C121 and C115/C126. One can recognise a C-type lectin domain in the interval 122–228; it reads HRNNCYQFFN…CANLNTYICM (107 aa). N137, N147, and N179 each carry an N-linked (GlcNAc...) asparagine glycan. 2 cysteine pairs are disulfide-bonded: C143/C227 and C205/C219.

Homodimer; disulfide-linked. Heterohexamer composed of two subunits of KLRK1 and four subunits of HCST/DAP10. Isoform 1 (via transmembrane domain) interacts with HCST/DAP10; the interaction is required for KLRK1 cell surface expression on activated CD8(+) T-cells, but is dispensable on activated TYROBP-expressing NK cells. Isoform 2 (via transmembrane domain) interacts with HCST/DAP10 (via transmembrane domain); the interaction is required for KLRK1 NK cell surface expression and induces NK cell-mediated cytotoxicity. Isoform 2 (via transmembrane domain) interacts with TYROBP (via transmembrane domain); the interaction is required for KLRK1 NK cell surface expression and induce NK cell-mediated cytotoxicity and cytokine secretion. Isoform 1 does not interact with TYROBP. Interacts with CEACAM1; recruits PTPN6 that dephosphorylates VAV1. Expressed in natural killer (NK) cells, activated CD8(+) alpha-beta and gamma-delta T-cells and natural killer T (NKT) cells (at protein level). May be expressed on dendritic cell (DC). Isoform 1 is strongly expressed in natural killer (NK) cells. Isoform 2 is weakly expressed in natural killer (NK) cells. Isoform 1 and isoform 2 are expressed in stimulated, but not in unstimulated, CD8(+) T-cells and macrophages.

The protein resides in the cell membrane. Its function is as follows. Functions as an activating and costimulatory receptor involved in immunosurveillance upon binding to various cellular stress-inducible ligands displayed at the surface of autologous tumor cells and virus-infected cells. Provides both stimulatory and costimulatory innate immune responses on activated killer (NK) cells, leading to cytotoxic activity. Acts as a costimulatory receptor for T-cell receptor (TCR) in CD8(+) T-cell-mediated adaptive immune responses by amplifying T-cell activation. Stimulates perforin-mediated elimination of ligand-expressing tumor cells. Signaling involves calcium influx, culminating in the expression of TNF-alpha. Participates in NK cell-mediated bone marrow graft rejection. May play a regulatory role in differentiation and survival of NK cells. Binds to ligands belonging to various subfamilies of MHC class I-related glycoproteins including RAET1A, RAET1B, RAET1C, RAET1D, RAET1E, H60 and MULT1. This Mus musculus (Mouse) protein is NKG2-D type II integral membrane protein (Klrk1).